A 339-amino-acid polypeptide reads, in one-letter code: GTPase Obg (339 aa).

One can recognise an Obg domain in the interval 1–159 (MKFVDEAFVR…RELKLELKLL (159 aa)). Residues 127–147 (NTHFKSSTNRAPRRTTSGEEG) are disordered. In terms of domain architecture, OBG-type G spans 160 to 333 (ADVGLLGLPN…LCYDLMSFLE (174 aa)). GTP contacts are provided by residues 166–173 (GLPNAGKS), 191–195 (FTTLY), 213–216 (DIPG), 283–286 (NKID), and 314–316 (SAI). Mg(2+) contacts are provided by S173 and T193.

This sequence belongs to the TRAFAC class OBG-HflX-like GTPase superfamily. OBG GTPase family. Monomer. Mg(2+) is required as a cofactor.

The protein localises to the cytoplasm. Its function is as follows. An essential GTPase which binds GTP, GDP and possibly (p)ppGpp with moderate affinity, with high nucleotide exchange rates and a fairly low GTP hydrolysis rate. Plays a role in control of the cell cycle, stress response, ribosome biogenesis and in those bacteria that undergo differentiation, in morphogenesis control. This is GTPase Obg from Coxiella burnetii (strain CbuK_Q154) (Coxiella burnetii (strain Q154)).